A 352-amino-acid polypeptide reads, in one-letter code: Glycerol-1-phosphate dehydrogenase [NAD(P)+] (352 aa).

NAD(+)-binding positions include 91–95 (GRVID) and 113–116 (TVAS). Asp118 is a binding site for substrate. Residue Ser122 participates in NAD(+) binding. Glu169 is a substrate binding site. Zn(2+) is bound by residues Glu169 and His249. His253 is a binding site for substrate. His269 serves as a coordination point for Zn(2+).

Belongs to the glycerol-1-phosphate dehydrogenase family. In terms of assembly, homodimer. It depends on Zn(2+) as a cofactor.

The protein resides in the cytoplasm. It carries out the reaction sn-glycerol 1-phosphate + NAD(+) = dihydroxyacetone phosphate + NADH + H(+). The catalysed reaction is sn-glycerol 1-phosphate + NADP(+) = dihydroxyacetone phosphate + NADPH + H(+). The protein operates within membrane lipid metabolism; glycerophospholipid metabolism. Catalyzes the NAD(P)H-dependent reduction of dihydroxyacetonephosphate (DHAP or glycerone phosphate) to glycerol 1-phosphate (G1P). The G1P thus generated is used as the glycerophosphate backbone of phospholipids in the cellular membranes of Archaea. The protein is Glycerol-1-phosphate dehydrogenase [NAD(P)+] of Caldivirga maquilingensis (strain ATCC 700844 / DSM 13496 / JCM 10307 / IC-167).